The chain runs to 1487 residues: Major viral transcription factor ICP4 homolog (1487 aa).

3 disordered regions span residues alanine 41–glycine 295, leucine 310–alanine 370, and proline 803–arginine 1007. The span at valine 66–glutamate 75 shows a compositional bias: pro residues. Composition is skewed to low complexity over residues proline 165–serine 193 and aspartate 201–serine 213. The span at aspartate 214–glutamate 224 shows a compositional bias: acidic residues. A compositionally biased stretch (low complexity) spans alanine 235–glycine 272. A compositionally biased stretch (pro residues) spans alanine 273–serine 285. Composition is skewed to low complexity over residues serine 807–serine 829, proline 849–glutamine 860, and alanine 867–glutamine 877. The span at threonine 878–arginine 893 shows a compositional bias: polar residues. The span at histidine 920–lysine 929 shows a compositional bias: basic residues. The span at alanine 938–alanine 951 shows a compositional bias: low complexity. Positions glycine 988–arginine 1007 are enriched in basic and acidic residues.

The protein belongs to the herpesviridae ICP4 family. In terms of processing, a long stretch of serine residues may be a major site of phosphorylation.

It localises to the host nucleus. Functionally, this IE protein is a multifunctional protein capable of migrating to the nucleus, binding to DNA, trans-activating other viral genes, and autoregulating its own synthesis. This is Major viral transcription factor ICP4 homolog (IE) from Equus caballus (Horse).